Consider the following 250-residue polypeptide: 5'-nucleotidase SurE (250 aa).

Positions 9, 10, 40, and 92 each coordinate a divalent metal cation.

It belongs to the SurE nucleotidase family. A divalent metal cation is required as a cofactor.

It localises to the cytoplasm. It catalyses the reaction a ribonucleoside 5'-phosphate + H2O = a ribonucleoside + phosphate. In terms of biological role, nucleotidase that shows phosphatase activity on nucleoside 5'-monophosphates. This chain is 5'-nucleotidase SurE, found in Idiomarina loihiensis (strain ATCC BAA-735 / DSM 15497 / L2-TR).